Reading from the N-terminus, the 130-residue chain is Phosphoribosyl-AMP cyclohydrolase (130 aa).

Aspartate 78 contacts Mg(2+). Residue cysteine 79 coordinates Zn(2+). Residues aspartate 80 and aspartate 82 each coordinate Mg(2+). Zn(2+) is bound by residues cysteine 96 and cysteine 103.

Belongs to the PRA-CH family. Homodimer. Mg(2+) serves as cofactor. It depends on Zn(2+) as a cofactor.

Its subcellular location is the cytoplasm. It carries out the reaction 1-(5-phospho-beta-D-ribosyl)-5'-AMP + H2O = 1-(5-phospho-beta-D-ribosyl)-5-[(5-phospho-beta-D-ribosylamino)methylideneamino]imidazole-4-carboxamide. It functions in the pathway amino-acid biosynthesis; L-histidine biosynthesis; L-histidine from 5-phospho-alpha-D-ribose 1-diphosphate: step 3/9. Its function is as follows. Catalyzes the hydrolysis of the adenine ring of phosphoribosyl-AMP. In Methylobacillus flagellatus (strain ATCC 51484 / DSM 6875 / VKM B-1610 / KT), this protein is Phosphoribosyl-AMP cyclohydrolase.